A 321-amino-acid chain; its full sequence is Putative sulfotransferase vep-2 (321 aa).

Residues 11–31 traverse the membrane as a helical segment; that stretch reads IARVLIIIASISVICITLFIS.

The protein to C.elegans C41C4.1 and C18B2.2.

It localises to the membrane. This is Putative sulfotransferase vep-2 from Caenorhabditis elegans.